The sequence spans 423 residues: WD repeat and SOCS box-containing protein 1 (423 aa).

The disordered stretch occupies residues 76–100 (DRSSGAGPRRLSRQNSEGSLLPGEP). 5 WD repeats span residues 125 to 166 (SRCV…LLLN), 169 to 209 (DHTD…NMVK), 213 to 252 (GHQN…LIRK), 255 to 294 (GHHN…VLLE), and 310 to 347 (ANDR…KSPQ). An SOCS box domain is found at 373–423 (DGSVHFWASPRSIASLQHLCRMTLRRVMPTQQVYTLPIPFSMQDYLAYKTL).

In terms of assembly, component of a probable ECS E3 ubiquitin-protein ligase complex that contains the Elongin BC complex.

Its pathway is protein modification; protein ubiquitination. In terms of biological role, probable substrate-recognition component of a SCF-like ECS (Elongin-Cullin-SOCS-box protein) E3 ubiquitin-protein ligase complex which mediates the ubiquitination and subsequent proteasomal degradation of target proteins. In Danio rerio (Zebrafish), this protein is WD repeat and SOCS box-containing protein 1 (wsb1).